The chain runs to 223 residues: Proteasome subunit beta type-1 (223 aa).

Belongs to the peptidase T1B family. In terms of assembly, component of the 20S core complex of the 26S proteasome. The 26S proteasome is composed of a core protease (CP), known as the 20S proteasome, capped at one or both ends by the 19S regulatory particle (RP/PA700). The 20S proteasome core is composed of 28 subunits that are arranged in four stacked rings, resulting in a barrel-shaped structure. The two end rings are each formed by seven alpha subunits, and the two central rings are each formed by seven beta subunits. The catalytic chamber with the active sites is on the inside of the barrel. As to expression, present in all tissues examined. Slightly lower levels in roots.

The protein resides in the cytoplasm. Its subcellular location is the nucleus. Its function is as follows. Non-catalytic component of the proteasome, a multicatalytic proteinase complex which is characterized by its ability to cleave peptides with Arg, Phe, Tyr, Leu, and Glu adjacent to the leaving group at neutral or slightly basic pH. The proteasome has an ATP-dependent proteolytic activity. In Arabidopsis thaliana (Mouse-ear cress), this protein is Proteasome subunit beta type-1 (PBF1).